We begin with the raw amino-acid sequence, 736 residues long: Phosphoribosylformylglycinamidine synthase subunit PurL (736 aa).

The active site involves His-50. 2 residues coordinate ATP: Tyr-53 and Lys-92. Glu-94 provides a ligand contact to Mg(2+). Residues 95–98 and Arg-117 contribute to the substrate site; that span reads SHNH. The Proton acceptor role is filled by His-96. Asp-118 is a Mg(2+) binding site. Gln-241 contacts substrate. Asp-269 is a Mg(2+) binding site. 313-315 provides a ligand contact to substrate; that stretch reads ESQ. Positions 495 and 532 each coordinate ATP. Asn-533 contacts Mg(2+). Residue Ser-535 coordinates substrate.

This sequence belongs to the FGAMS family. In terms of assembly, monomer. Part of the FGAM synthase complex composed of 1 PurL, 1 PurQ and 2 PurS subunits.

The protein localises to the cytoplasm. The catalysed reaction is N(2)-formyl-N(1)-(5-phospho-beta-D-ribosyl)glycinamide + L-glutamine + ATP + H2O = 2-formamido-N(1)-(5-O-phospho-beta-D-ribosyl)acetamidine + L-glutamate + ADP + phosphate + H(+). It functions in the pathway purine metabolism; IMP biosynthesis via de novo pathway; 5-amino-1-(5-phospho-D-ribosyl)imidazole from N(2)-formyl-N(1)-(5-phospho-D-ribosyl)glycinamide: step 1/2. In terms of biological role, part of the phosphoribosylformylglycinamidine synthase complex involved in the purines biosynthetic pathway. Catalyzes the ATP-dependent conversion of formylglycinamide ribonucleotide (FGAR) and glutamine to yield formylglycinamidine ribonucleotide (FGAM) and glutamate. The FGAM synthase complex is composed of three subunits. PurQ produces an ammonia molecule by converting glutamine to glutamate. PurL transfers the ammonia molecule to FGAR to form FGAM in an ATP-dependent manner. PurS interacts with PurQ and PurL and is thought to assist in the transfer of the ammonia molecule from PurQ to PurL. This chain is Phosphoribosylformylglycinamidine synthase subunit PurL, found in Bartonella quintana (strain Toulouse) (Rochalimaea quintana).